The following is a 466-amino-acid chain: Muscarinic acetylcholine receptor M2 (466 aa).

The Extracellular segment spans residues 1–22 (MNNSTNSSNNSLALTSPYKTFE). N-linked (GlcNAc...) asparagine glycosylation is found at Asn2, Asn3, Asn6, and Asn9. Residues 23–45 (VVFIVLVAGSLSLVTIIGNILVM) form a helical membrane-spanning segment. At 46–59 (VSIKVNRHLQTVNN) the chain is on the cytoplasmic side. Residues 60–80 (YFLFSLACADLIIGVFSMNLY) traverse the membrane as a helical segment. The Extracellular segment spans residues 81–97 (TLYTVIGYWPLGPVVCD). An intrachain disulfide couples Cys96 to Cys176. The helical transmembrane segment at 98–119 (LWLALDYVVSNASVMNLLIISF) threads the bilayer. The Important for signaling motif lies at 120-122 (DRY). At 120 to 139 (DRYFCVTKPLTYPVKRTTKM) the chain is on the cytoplasmic side. A helical membrane pass occupies residues 140–162 (AGMMIAAAWVLSFILWAPAILFW). Residues 163-184 (QFIVGVRTVEDGECYIQFFSNA) lie on the Extracellular side of the membrane. The chain crosses the membrane as a helical span at residues 185–209 (AVTFGTAIAAFYLPVIIMTVLYWHI). At 210–387 (SRASKSRIKK…PPSREKKVTR (178 aa)) the chain is on the cytoplasmic side. Residues 218–355 (KKDKKEPVAN…VVGSSGQNGD (138 aa)) are disordered. Ser232 bears the Phosphoserine mark. Over residues 254-270 (GLEHNKIQNGKAPRDPV) the composition is skewed to basic and acidic residues. 3 stretches are compositionally biased toward polar residues: residues 284-293 (NDSTSVSAVA), 304-313 (DENTVSTSLG), and 334-353 (SDSC…SGQN). A helical transmembrane segment spans residues 388-410 (TILAILLAFIITWAPYNVMVLIN). Residues 411 to 418 (TFCAPCIP) lie on the Extracellular side of the membrane. Cysteines 413 and 416 form a disulfide. Residues 419 to 442 (NTVWTIGYWLCYINSTINPACYAL) traverse the membrane as a helical segment. The Important for signaling signature appears at 436-440 (NPACY). Topologically, residues 443–466 (CNATFKKTFKHLLMCHYKNIGATR) are cytoplasmic. Residues Thr446, Thr450, and Thr465 each carry the phosphothreonine modification.

Belongs to the G-protein coupled receptor 1 family. Muscarinic acetylcholine receptor subfamily. CHRM2 sub-subfamily. As to quaternary structure, interacts with ARRB1 and ARRB2. Interacts with RACK1; the interaction regulates CHRM2 internalization. In terms of processing, phosphorylated in response to agonist treatment.

The protein resides in the cell membrane. It is found in the postsynaptic cell membrane. In terms of biological role, the muscarinic acetylcholine receptor mediates various cellular responses, including inhibition of adenylate cyclase, breakdown of phosphoinositides and modulation of potassium channels through the action of G proteins. Primary transducing effect is adenylate cyclase inhibition. Signaling promotes phospholipase C activity, leading to the release of inositol trisphosphate (IP3); this then triggers calcium ion release into the cytosol. The chain is Muscarinic acetylcholine receptor M2 (CHRM2) from Homo sapiens (Human).